The chain runs to 349 residues: N-acetyl-gamma-glutamyl-phosphate reductase (349 aa).

C152 is a catalytic residue.

This sequence belongs to the NAGSA dehydrogenase family. Type 1 subfamily.

It is found in the cytoplasm. It catalyses the reaction N-acetyl-L-glutamate 5-semialdehyde + phosphate + NADP(+) = N-acetyl-L-glutamyl 5-phosphate + NADPH + H(+). It participates in amino-acid biosynthesis; L-arginine biosynthesis; N(2)-acetyl-L-ornithine from L-glutamate: step 3/4. Catalyzes the NADPH-dependent reduction of N-acetyl-5-glutamyl phosphate to yield N-acetyl-L-glutamate 5-semialdehyde. This is N-acetyl-gamma-glutamyl-phosphate reductase from Clavibacter sepedonicus (Clavibacter michiganensis subsp. sepedonicus).